The following is a 368-amino-acid chain: 3-dehydroquinate synthase (368 aa).

Residues 112-116, 136-137, Lys-149, and Lys-158 each bind NAD(+); these read GVIGD and TT. 3 residues coordinate Zn(2+): Glu-191, His-256, and His-273.

The protein belongs to the sugar phosphate cyclases superfamily. Dehydroquinate synthase family. It depends on Co(2+) as a cofactor. Zn(2+) is required as a cofactor. NAD(+) serves as cofactor.

It is found in the cytoplasm. The catalysed reaction is 7-phospho-2-dehydro-3-deoxy-D-arabino-heptonate = 3-dehydroquinate + phosphate. It participates in metabolic intermediate biosynthesis; chorismate biosynthesis; chorismate from D-erythrose 4-phosphate and phosphoenolpyruvate: step 2/7. Its function is as follows. Catalyzes the conversion of 3-deoxy-D-arabino-heptulosonate 7-phosphate (DAHP) to dehydroquinate (DHQ). This is 3-dehydroquinate synthase from Prochlorococcus marinus (strain NATL1A).